The chain runs to 305 residues: Plant-type L-asparaginase (305 aa).

The active-site Nucleophile is the threonine 175. Residues 202-205 (RVGD) and 224-227 (TGLG) contribute to the substrate site.

This sequence belongs to the Ntn-hydrolase family. Heterotetramer of two alpha and two beta chains arranged as a dimer of alpha/beta heterodimers. The uncleaved protein forms homodimers. In terms of processing, autocleaved. Generates the alpha and beta subunits. The N-terminal residue of the beta subunit is thought to be responsible for the nucleophile hydrolase activity.

The catalysed reaction is L-asparagine + H2O = L-aspartate + NH4(+). In terms of biological role, catalyzes the hydrolysis of L-asparagine into L-aspartate and ammonia. Does not exhibit glutaminase activity. This Pyrococcus abyssi (strain GE5 / Orsay) protein is Plant-type L-asparaginase.